The primary structure comprises 189 residues: 3-isopropylmalate dehydratase small subunit (189 aa).

It belongs to the LeuD family. LeuD type 1 subfamily. As to quaternary structure, heterodimer of LeuC and LeuD.

The catalysed reaction is (2R,3S)-3-isopropylmalate = (2S)-2-isopropylmalate. Its pathway is amino-acid biosynthesis; L-leucine biosynthesis; L-leucine from 3-methyl-2-oxobutanoate: step 2/4. In terms of biological role, catalyzes the isomerization between 2-isopropylmalate and 3-isopropylmalate, via the formation of 2-isopropylmaleate. This Francisella tularensis subsp. holarctica (strain FTNF002-00 / FTA) protein is 3-isopropylmalate dehydratase small subunit.